A 486-amino-acid chain; its full sequence is Bifunctional protein GlmU (486 aa).

Residues 1–241 (MSASDSSSAV…ARELAGVNDR (241 aa)) form a pyrophosphorylase region. Residues 13–16 (LAAG), Lys-27, Gln-84, and 89–90 (GT) contribute to the UDP-N-acetyl-alpha-D-glucosamine site. Asp-114 serves as a coordination point for Mg(2+). Gly-151, Glu-166, Asn-181, and Asn-239 together coordinate UDP-N-acetyl-alpha-D-glucosamine. Mg(2+) is bound at residue Asn-239. The interval 242–262 (VQLAEAGAELNRRTVEAAMRG) is linker. Residues 263–486 (GATIVDPATT…AQNSVPNQEG (224 aa)) are N-acetyltransferase. The UDP-N-acetyl-alpha-D-glucosamine site is built by Arg-344 and Lys-362. The active-site Proton acceptor is His-374. Tyr-377 and Asn-388 together coordinate UDP-N-acetyl-alpha-D-glucosamine. Residues Ala-391, 397–398 (NY), Ser-416, and Ala-434 contribute to the acetyl-CoA site. The tract at residues 464 to 486 (KRPGTAAADAAAAAQNSVPNQEG) is disordered.

This sequence in the N-terminal section; belongs to the N-acetylglucosamine-1-phosphate uridyltransferase family. It in the C-terminal section; belongs to the transferase hexapeptide repeat family. Homotrimer. Mg(2+) serves as cofactor.

It is found in the cytoplasm. It carries out the reaction alpha-D-glucosamine 1-phosphate + acetyl-CoA = N-acetyl-alpha-D-glucosamine 1-phosphate + CoA + H(+). The catalysed reaction is N-acetyl-alpha-D-glucosamine 1-phosphate + UTP + H(+) = UDP-N-acetyl-alpha-D-glucosamine + diphosphate. Its pathway is nucleotide-sugar biosynthesis; UDP-N-acetyl-alpha-D-glucosamine biosynthesis; N-acetyl-alpha-D-glucosamine 1-phosphate from alpha-D-glucosamine 6-phosphate (route II): step 2/2. The protein operates within nucleotide-sugar biosynthesis; UDP-N-acetyl-alpha-D-glucosamine biosynthesis; UDP-N-acetyl-alpha-D-glucosamine from N-acetyl-alpha-D-glucosamine 1-phosphate: step 1/1. It participates in bacterial outer membrane biogenesis; LPS lipid A biosynthesis. In terms of biological role, catalyzes the last two sequential reactions in the de novo biosynthetic pathway for UDP-N-acetylglucosamine (UDP-GlcNAc). The C-terminal domain catalyzes the transfer of acetyl group from acetyl coenzyme A to glucosamine-1-phosphate (GlcN-1-P) to produce N-acetylglucosamine-1-phosphate (GlcNAc-1-P), which is converted into UDP-GlcNAc by the transfer of uridine 5-monophosphate (from uridine 5-triphosphate), a reaction catalyzed by the N-terminal domain. This is Bifunctional protein GlmU from Corynebacterium efficiens (strain DSM 44549 / YS-314 / AJ 12310 / JCM 11189 / NBRC 100395).